The sequence spans 80 residues: Exodeoxyribonuclease 7 small subunit (80 aa).

Belongs to the XseB family. As to quaternary structure, heterooligomer composed of large and small subunits.

It is found in the cytoplasm. The enzyme catalyses Exonucleolytic cleavage in either 5'- to 3'- or 3'- to 5'-direction to yield nucleoside 5'-phosphates.. In terms of biological role, bidirectionally degrades single-stranded DNA into large acid-insoluble oligonucleotides, which are then degraded further into small acid-soluble oligonucleotides. The chain is Exodeoxyribonuclease 7 small subunit from Rickettsia conorii (strain ATCC VR-613 / Malish 7).